An 812-amino-acid chain; its full sequence is DNA translocase FtsK 1 (812 aa).

Positions Met1–Lys11 are enriched in basic residues. Residues Met1–Val36 are disordered. The span at Lys25–Val36 shows a compositional bias: basic and acidic residues. A run of 5 helical transmembrane segments spans residues Ile63–Ile83, Val116–Leu136, Ile156–Leu176, Leu184–Leu204, and Leu210–Leu230. The Cytoplasmic segment spans residues Glu231–Leu812. One can recognise a FtsK domain in the interval Gly461–Arg670. Gly481 to Val486 is an ATP binding site.

The protein belongs to the FtsK/SpoIIIE/SftA family. Homohexamer. Forms a ring that surrounds DNA.

It localises to the cell inner membrane. In terms of biological role, essential cell division protein that coordinates cell division and chromosome segregation. The N-terminus is involved in assembly of the cell-division machinery. The C-terminus functions as a DNA motor that moves dsDNA in an ATP-dependent manner towards the dif recombination site, which is located within the replication terminus region. Translocation stops specifically at Xer-dif sites, where FtsK interacts with the Xer recombinase, allowing activation of chromosome unlinking by recombination. FtsK orienting polar sequences (KOPS) guide the direction of DNA translocation. FtsK can remove proteins from DNA as it translocates, but translocation stops specifically at XerCD-dif site, thereby preventing removal of XerC and XerD from dif. The polypeptide is DNA translocase FtsK 1 (ftsK1) (Neisseria meningitidis serogroup A / serotype 4A (strain DSM 15465 / Z2491)).